Consider the following 363-residue polypeptide: Heme A synthase (363 aa).

Helical transmembrane passes span 21–41, 107–127, 138–158, 174–194, 207–227, 268–288, 301–321, and 323–343; these read ALVR…VLVG, RLLA…FWVS, LVGI…MVAS, HLTL…GLAP, LAGF…LVAG, FVHR…MIAT, ATLL…TLLM, and VPLH…GFAA. A heme-binding site is contributed by H270. H331 contributes to the heme binding site.

This sequence belongs to the COX15/CtaA family. Type 2 subfamily. Interacts with CtaB. The cofactor is heme b.

It localises to the cell membrane. The enzyme catalyses Fe(II)-heme o + 2 A + H2O = Fe(II)-heme a + 2 AH2. It functions in the pathway porphyrin-containing compound metabolism; heme A biosynthesis; heme A from heme O: step 1/1. Functionally, catalyzes the conversion of heme O to heme A by two successive hydroxylations of the methyl group at C8. The first hydroxylation forms heme I, the second hydroxylation results in an unstable dihydroxymethyl group, which spontaneously dehydrates, resulting in the formyl group of heme A. The polypeptide is Heme A synthase (Mesorhizobium japonicum (strain LMG 29417 / CECT 9101 / MAFF 303099) (Mesorhizobium loti (strain MAFF 303099))).